A 295-amino-acid polypeptide reads, in one-letter code: Indole-3-glycerol phosphate synthase (295 aa).

Belongs to the TrpC family.

It carries out the reaction 1-(2-carboxyphenylamino)-1-deoxy-D-ribulose 5-phosphate + H(+) = (1S,2R)-1-C-(indol-3-yl)glycerol 3-phosphate + CO2 + H2O. Its pathway is amino-acid biosynthesis; L-tryptophan biosynthesis; L-tryptophan from chorismate: step 4/5. The sequence is that of Indole-3-glycerol phosphate synthase from Prochlorococcus marinus subsp. pastoris (strain CCMP1986 / NIES-2087 / MED4).